The chain runs to 611 residues: Adenosylhomocysteinase 3 (611 aa).

Low complexity-rich tracts occupy residues 1–14 (MSVQ…AAKV), 40–57 (AMAP…APAA), and 68–78 (GPAAALSPAAG). Residues 1-184 (MSVQVVSAAA…KQQKNSKGNS (184 aa)) are disordered. Position 2 is an N-acetylserine (Ser-2). The interval 2 to 109 (SVQVVSAAAA…DGGEALVSPD (108 aa)) is LISN domain, inhibits interaction with ITPR1. Ser-107 is subject to Phosphoserine. A compositionally biased stretch (basic residues) spans 135–144 (RPTKIGRRSL). Residues 145–164 (SRSISQSSTDSYSSAASYTD) are compositionally biased toward low complexity. A phosphoserine mark is found at Ser-149, Ser-152, Ser-155, and Ser-158. Positions 236, 310, and 335 each coordinate substrate. 336–338 (SVT) lines the NAD(+) pocket. Residues Lys-365 and Asp-369 each coordinate substrate. NAD(+)-binding positions include Asn-370, 401–406 (GEVGKG), Glu-422, Asn-457, 478–479 (MG), and Asn-525.

This sequence belongs to the adenosylhomocysteinase family. Homotetramer. Forms heteromultimers with AHCYL1 (via the C-terminal region). Interacts with ITPR1; with lower affinity than AHCYL1 and maybe via ITPR1. Interacts with SLC4A4. Interacts with ZCCHC4. NAD(+) is required as a cofactor. Post-translationally, phosphorylated during neuronal differentiation at the LISN domain. Expressed in parotid and acinar cells (at protein level).

The protein localises to the cytoplasm. The protein resides in the microsome. The enzyme catalyses S-adenosyl-L-homocysteine + H2O = L-homocysteine + adenosine. It participates in amino-acid biosynthesis; L-homocysteine biosynthesis; L-homocysteine from S-adenosyl-L-homocysteine: step 1/1. In terms of biological role, may regulate the electrogenic sodium/bicarbonate cotransporter SLC4A4 activity and Mg(2+)-sensitivity. On the contrary of its homolog AHCYL1, does not regulate ITPR1 sensitivity to inositol 1,4,5-trisphosphate. The chain is Adenosylhomocysteinase 3 from Bos taurus (Bovine).